Consider the following 433-residue polypeptide: Steroid hormone receptor ERR2 (433 aa).

Residues 1 to 41 (MSSEDRHLGSSCGSFIKTEPSSPSSGIDALSHHSPSGSSDA) form a disordered region. Residues 32 to 41 (HHSPSGSSDA) are compositionally biased toward low complexity. The interaction with NANOG stretch occupies residues 93–211 (YMLNAIPKRL…SPPAKKPLTK (119 aa)). A DNA-binding region (nuclear receptor) is located at residues 100 to 186 (KRLCLVCGDI…RVRGGRQKYK (87 aa)). 2 consecutive NR C4-type zinc fingers follow at residues 103-123 (CLVC…CEAC) and 139-163 (CPAT…FMKC). Positions 203-433 (PPAKKPLTKI…LFLEMLEAKV (231 aa)) are essential for ESRRB transcriptional activity and interaction with NCOA3. Residues 208-432 (PLTKIVSYLL…KLFLEMLEAK (225 aa)) enclose the NR LBD domain.

This sequence belongs to the nuclear hormone receptor family. NR3 subfamily. In terms of assembly, binds DNA as a monomer. Interacts with NR0B1; represses ESRRB activity at the GATA6 promoter. Interacts with NANOG; reciprocally modulates their transcriptional activities and activates POU5F1 expression. Interacts with NCOA3; mediates the interaction between ESRRB and RNA polymerase II complexes and allows NCOA3 corecruitment to ESRRB, KLF4, NANOG, and SOX2 enhancer regions to trigger ESRRB-dependent gene activation involved in self-renewal and pluripotency. Interacts with KDM1A; co-occupes the core set of ESRRB targets including ELF5 and EOMES. Interacts with the multiprotein complex Integrator, at least composed of INTS1, INTS2, INTS3, INTS4, INTS5, INTS6, INTS7, INTS8, INTS9/RC74, INTS10, INTS11/CPSF3L and INTS12; ESRRB is probably not a core component of the integrator complex and associates to integrator via its interaction with INTS1 and INTS9; attracts the transcriptional machinery. Interacts with JARID2. Interacts with POU5F1; recruits ESRRB near the POU5F1-SOX2 element in the NANOG proximal promoter leading to activation of NANOG expression; the interaction is DNA independent. In terms of processing, acetylated by PCAF/KAT2 (in vitro).

It localises to the nucleus. The protein resides in the cytoplasm. Its subcellular location is the chromosome. Transcription factor that binds a canonical ESRRB recognition (ERRE) sequence 5'TCAAGGTCA-3' localized on promoter and enhancer of targets genes regulating their expression or their transcription activity. Plays a role, in a LIF independent manner, in maintainance of self-renewal and pluripotency of embryonic and trophoblast stem cells through different signaling pathways including FGF signaling pathway and Wnt signaling pathways. Involved in morula development (2-16 cells embryos) by acting as a regulator at the 8-cell stage. Upon FGF signaling pathway activation, interacts with KDM1A by directly binding to enhancer site of ELF5 and EOMES and activating their transcription leading to self-renewal of trophoblast stem cells. Also regulates expression of multiple rod-specific genes and is required for survival of this cell type. Plays a role as transcription factor activator of GATA6, NR0B1, POU5F1 and PERM1. Plays a role as transcription factor repressor of NFE2L2 transcriptional activity and ESR1 transcriptional activity. During mitosis remains bound to a subset of interphase target genes, including pluripotency regulators, through the canonical ESRRB recognition (ERRE) sequence, leading to their transcriptional activation in early G1 phase. Can coassemble on structured DNA elements with other transcription factors like SOX2, POU5F1, KDM1A and NCOA3 to trigger ESRRB-dependent gene activation. This mechanism, in the case of SOX2 corecruitment prevents the embryonic stem cells (ESCs) to epiblast stem cells (EpiSC) transition through positive regulation of NR0B1 that inhibits the EpiSC transcriptional program. Also plays a role inner ear development by controlling expression of ion channels and transporters and in early placentation. This is Steroid hormone receptor ERR2 from Rattus norvegicus (Rat).